Here is a 62-residue protein sequence, read N- to C-terminus: UPF0434 protein Arad_4458 (62 aa).

The protein belongs to the UPF0434 family.

In Rhizobium rhizogenes (strain K84 / ATCC BAA-868) (Agrobacterium radiobacter), this protein is UPF0434 protein Arad_4458.